A 301-amino-acid chain; its full sequence is NADH-cytochrome b5 reductase 3 (301 aa).

The N-myristoyl glycine moiety is linked to residue Gly-2. An FAD-binding FR-type domain is found at 40-152 (DIKYPLRLID…RGPSGLLVYQ (113 aa)). Lys-42 bears the N6-acetyllysine mark. Tyr-43 is modified (phosphotyrosine). FAD contacts are provided by Arg-92, Pro-93, Tyr-94, Val-109, Lys-111, and Phe-114. Lys-120 is modified (N6-acetyllysine). FAD-binding residues include Lys-126, Met-127, Ser-128, and Thr-185.

It belongs to the flavoprotein pyridine nucleotide cytochrome reductase family. Component of a complex composed of cytochrome b5, NADH-cytochrome b5 reductase (CYB5R3) and MTARC2. Interacts with MTLN; the interaction is required to maintain cellular lipid composition and leads to stimulation of mitochondrial respiratory complex I activity. FAD serves as cofactor. Expressed at late stages of erythroid maturation.

It is found in the endoplasmic reticulum membrane. Its subcellular location is the mitochondrion outer membrane. The protein localises to the cytoplasm. The catalysed reaction is 2 Fe(III)-[cytochrome b5] + NADH = 2 Fe(II)-[cytochrome b5] + NAD(+) + H(+). Its function is as follows. Catalyzes the reduction of two molecules of cytochrome b5 using NADH as the electron donor. The protein is NADH-cytochrome b5 reductase 3 of Homo sapiens (Human).